Consider the following 448-residue polypeptide: Protein chibby homolog 2 (448 aa).

A phosphoserine mark is found at Ser-41, Ser-86, Ser-89, Ser-97, Ser-124, Ser-144, Ser-148, and Ser-150. Residues 164-198 are a coiled coil; that stretch reads KECMLQEENKSLREENKALREENRMLSKENKILQV. Residues Ser-212 and Ser-225 each carry the phosphoserine modification. Positions 242–267 form a coiled coil; that stretch reads KEDSTLQLLREENRALQQLLEQKQAY. The segment at 270–323 is disordered; the sequence is QAEDTAAPAEESKPAPSPHEEPCSPGLLQDQGSGLSSRFEEPKGPPARQEDSKE. Basic and acidic residues-rich tracts occupy residues 279–291 and 307–323; these read EESKPAPSPHEEP and RFEEPKGPPARQEDSKE. A phosphoserine mark is found at Ser-335 and Ser-338. The stretch at 356-414 forms a coiled coil; that stretch reads LQLLREMRQALQALLKENRLLQEENRTLQVLRAEHRGFQEENKALWENNKLKLQQKLVI.

Belongs to the chibby family. SPERT subfamily. As to quaternary structure, homodimer. Binds to NEK1. In terms of tissue distribution, testis-specific.

The protein is Protein chibby homolog 2 of Homo sapiens (Human).